Consider the following 493-residue polypeptide: MVSSVSLFASLTPYLVSALLLFLLLEQLFYRLKKRNLPGPLFVFPIIGNVVALIRDPTSFWDKQSAMADTSVGLSVNYLIGKFIIYIKDAELSNKVFSNIRPDAFQLVGHPFGKKLFGDHSLIFMFGENHKSVRRQVAPNFTRKPLSAYSSLQQIVILRHLRQWEESFSSGSRPVSMRQLIRELNLETSQTVFVGPYLDKEVKNTIRDDYNVFNPGTMALPIDLPGFTFGEARRAVSRLVNTMSLCVRKSKEKMAAGENPTCLVDFWTHSIVAESPPPPHSKDEEISCVLVDFLFASQDASTSSLLWAVVLLESEPEVLRRVREDVARFWSPESKESITADQLAEMKYIRAVAREVLRYRPPASMVPHVAVSDFRLTESYTIPKGTIVFPSLFDASFQGFTEPDRFDPDRFSETRQEDEVFKRNFLTFGIGSHQCVGQRYALNHLVLFIAMFSSMFDFKRVRSDGCDEIVHIPTMSPKDGCTVFLSSRLVTSP.

The helical transmembrane segment at 5–25 (VSLFASLTPYLVSALLLFLLL) threads the bilayer. C435 contributes to the heme binding site.

This sequence belongs to the cytochrome P450 family. The cofactor is heme. In terms of tissue distribution, expressed in stems. Detected in primary root caps and immature petals.

It localises to the membrane. The enzyme catalyses 5-dehydroepisterol + NADPH + O2 + H(+) = ergosta-5,7,22,24(28)-tetraen-3beta-ol + NADP(+) + 2 H2O. In terms of biological role, required to form the C-22 double bond in the sterol side chain. Possesses in vitro C-22 desaturase activity toward beta-sitosterol and produces stigmasterol. The protein is Cytochrome P450 710A3 of Arabidopsis thaliana (Mouse-ear cress).